Here is a 959-residue protein sequence, read N- to C-terminus: Isoleucine--tRNA ligase (959 aa).

Positions 60-70 (PYANGSLHMGH) match the 'HIGH' region motif. Residue Glu569 participates in L-isoleucyl-5'-AMP binding. Residues 610-614 (KMSKS) carry the 'KMSKS' region motif. Lys613 provides a ligand contact to ATP. Residues Cys928, Cys931, Cys948, and Cys951 each contribute to the Zn(2+) site.

Belongs to the class-I aminoacyl-tRNA synthetase family. IleS type 1 subfamily. Monomer. The cofactor is Zn(2+).

The protein resides in the cytoplasm. It catalyses the reaction tRNA(Ile) + L-isoleucine + ATP = L-isoleucyl-tRNA(Ile) + AMP + diphosphate. In terms of biological role, catalyzes the attachment of isoleucine to tRNA(Ile). As IleRS can inadvertently accommodate and process structurally similar amino acids such as valine, to avoid such errors it has two additional distinct tRNA(Ile)-dependent editing activities. One activity is designated as 'pretransfer' editing and involves the hydrolysis of activated Val-AMP. The other activity is designated 'posttransfer' editing and involves deacylation of mischarged Val-tRNA(Ile). The polypeptide is Isoleucine--tRNA ligase (Rippkaea orientalis (strain PCC 8801 / RF-1) (Cyanothece sp. (strain PCC 8801))).